The following is a 466-amino-acid chain: Asparagine--tRNA ligase (466 aa).

It belongs to the class-II aminoacyl-tRNA synthetase family. As to quaternary structure, homodimer.

The protein localises to the cytoplasm. The catalysed reaction is tRNA(Asn) + L-asparagine + ATP = L-asparaginyl-tRNA(Asn) + AMP + diphosphate + H(+). This chain is Asparagine--tRNA ligase, found in Psychromonas ingrahamii (strain DSM 17664 / CCUG 51855 / 37).